The primary structure comprises 483 residues: Regulatory protein ViaA (483 aa).

The protein belongs to the ViaA family. As to quaternary structure, homodimer. Interacts with RavA.

Its subcellular location is the cytoplasm. Functionally, component of the RavA-ViaA chaperone complex, which may act on the membrane to optimize the function of some of the respiratory chains. ViaA stimulates the ATPase activity of RavA. The chain is Regulatory protein ViaA from Escherichia coli O17:K52:H18 (strain UMN026 / ExPEC).